A 186-amino-acid polypeptide reads, in one-letter code: ADP-ribosylation factor-like protein 8B (186 aa).

Positions methionine 1–glutamate 19 form an intramembrane region, note=Mediates targeting to membranes. GTP-binding positions include glutamine 29 to threonine 35, aspartate 71 to glutamine 75, and asparagine 130 to aspartate 133. Lysine 141 is covalently cross-linked (Glycyl lysine isopeptide (Lys-Gly) (interchain with G-Cter in ubiquitin)).

This sequence belongs to the small GTPase superfamily. Arf family. As to quaternary structure, interacts with tubulin. Interacts with BORCS5; recruits ARL8B to lysosomes. Interacts with VPS41; the interaction mediates the recruitment of the HOPS complex to lysosomes. Interacts (GTP-bound form) with PLEKHM2 (via RUN domain); the interaction is required to recruit the motor protein kinesin-1 on lysosomes. Interacts (GTP-bound form) with PLEKHM1 (via RUN domain); the interaction is required for PLEKHM1 localization to lysosomes and for ARL8B function in delivery and degradation of endocytic and autophagic cargo in lysosomes. PLEKHM1 and PLEKHM2 compete for interaction with ARL8B. Interacts (GTP-bound form) with RUFY1; the interaction is required for RUFY1 endosomal location. When GTP-bound, interacts with RUFY3 and RUFY4, but not with RUFY1, nor RUFY2. Ubiquitinated at Lys-141 by RNF167, leading to its degradation.

It is found in the late endosome membrane. The protein localises to the lysosome membrane. The protein resides in the cytoplasm. Its subcellular location is the cytoskeleton. It localises to the spindle. It is found in the cell projection. The protein localises to the axon. The protein resides in the synapse. Its subcellular location is the cytolytic granule membrane. It localises to the early endosome membrane. It carries out the reaction GTP + H2O = GDP + phosphate + H(+). In terms of biological role, small GTPase which cycles between active GTP-bound and inactive GDP-bound states. In its active state, binds to a variety of effector proteins playing a key role in the regulation of lysosomal positioning which is important for nutrient sensing, natural killer cell-mediated cytotoxicity and antigen presentation. Along with its effectors, orchestrates lysosomal transport and fusion. Localizes specifically to lysosomal membranes and mediates anterograde lysosomal motility by recruiting PLEKHM2, which in turn recruits the motor protein kinesin-1 on lysosomes. Required for lysosomal and cytolytic granule exocytosis. Critical factor involved in NK cell-mediated cytotoxicity. Drives the polarization of cytolytic granules and microtubule-organizing centers (MTOCs) toward the immune synapse between effector NK lymphocytes and target cells. In neurons, mediates the anterograde axonal long-range transport of presynaptic lysosome-related vesicles required for presynaptic biogenesis and synaptic function. Also acts as a regulator of endosome to lysosome trafficking pathways of special significance for host defense. Recruits RUFY1 onto early endosomes regulating endosomes to trans-Golgi network proteins retrieval. Regulates cargo trafficking to lysosomes by binding to PLEKHM1 and recruiting the HOPS subunit VPS41, resulting in functional assembly of the HOPS complex on lysosomal membranes. Plays an important role in cargo delivery to lysosomes for antigen presentation and microbial killing. Directs the intersection of CD1d with lipid antigens in lysosomes, and plays a role in intersecting phagosomes with lysosomes to generate phagolysosomes that kill microbes. Involved in the process of MHC II presentation. Regulates the delivery of antigens to lysosomes and the formation of MHC II-peptide complexes through the recruitment of the HOPS complex to lysosomes allowing the fusion of late endosomes to lysosomes. May play a role in chromosome segregation. This Pongo abelii (Sumatran orangutan) protein is ADP-ribosylation factor-like protein 8B (ARL8B).